A 2161-amino-acid chain; its full sequence is DNA polymerase epsilon catalytic subunit A (2161 aa).

3 short sequence motifs (nuclear localization signal) span residues 5–12 (NRRRDRKD), 1137–1144 (HKKVREKD), and 1239–1246 (LKKRKWKV). Residues cysteine 2038, cysteine 2041, cysteine 2063, and cysteine 2068 each contribute to the Zn(2+) site. A CysA-type zinc finger spans residues 2038-2068 (CSNCDAYRDLDICRDPALLTEKEWSCADTQC). 4 residues coordinate [4Fe-4S] cluster: cysteine 2099, cysteine 2102, cysteine 2114, and cysteine 2116. The CysB motif motif lies at 2099 to 2116 (CIRCNQVKAAHLTEQCEC). The Nuclear localization signal 4 motif lies at 2130 to 2137 (SKRMEIFM).

The protein belongs to the DNA polymerase type-B family. Heterotetramer. Subunit of the DNA polymerase II. Interacts (via C-terminus) with DPB2. Interacts with LHP1/TFL2. The cofactor is [4Fe-4S] cluster. As to expression, mostly expressed at low levels in inflorescence (floral meristem and flowers until anthesis), and, to a lower extent, in roots, seeds and leaves.

Its subcellular location is the nucleus. The catalysed reaction is DNA(n) + a 2'-deoxyribonucleoside 5'-triphosphate = DNA(n+1) + diphosphate. Its function is as follows. DNA polymerase II, which participates in chromosomal DNA replication. Required for the timing and determination of cell fate during plant embryogenesis and root pole development, by promoting cell cycle and cell type patterning. Necessary for proper shoot (SAM) and root apical meristem (RAM) functions. Involved in maintaining epigenetic states, controlling hypersensitive response (HR), and mediating abscisic acid (ABA) signaling. Required for flowering repression through a mechanism involving epigenetic gene silencing. May participate in processes involved in chromatin-mediated cellular memory. The chain is DNA polymerase epsilon catalytic subunit A (POL2A) from Arabidopsis thaliana (Mouse-ear cress).